A 465-amino-acid polypeptide reads, in one-letter code: GTPase Der (465 aa).

EngA-type G domains are found at residues 3–166 (FLVA…LNEF) and 184–358 (IHFS…ACAN). Residues 9–16 (GRANVGKS), 56–60 (DTGGI), 118–121 (NKVD), 190–197 (GRPNVGKS), 237–241 (DTAGV), and 302–305 (NKWD) each bind GTP. The KH-like domain maps to 359–443 (KKITTADATR…PIVFEFKQSE (85 aa)).

This sequence belongs to the TRAFAC class TrmE-Era-EngA-EngB-Septin-like GTPase superfamily. EngA (Der) GTPase family. Associates with the 50S ribosomal subunit.

GTPase that plays an essential role in the late steps of ribosome biogenesis. In Francisella philomiragia subsp. philomiragia (strain ATCC 25017 / CCUG 19701 / FSC 153 / O#319-036), this protein is GTPase Der.